The chain runs to 119 residues: Holo-[acyl-carrier-protein] synthase (119 aa).

Mg(2+)-binding residues include Asp8 and Glu58.

This sequence belongs to the P-Pant transferase superfamily. AcpS family. Mg(2+) is required as a cofactor.

It localises to the cytoplasm. It catalyses the reaction apo-[ACP] + CoA = holo-[ACP] + adenosine 3',5'-bisphosphate + H(+). In terms of biological role, transfers the 4'-phosphopantetheine moiety from coenzyme A to a Ser of acyl-carrier-protein. In Streptococcus suis (strain 05ZYH33), this protein is Holo-[acyl-carrier-protein] synthase.